The primary structure comprises 405 residues: Arginine biosynthesis bifunctional protein ArgJ, mitochondrial (405 aa).

Substrate contacts are provided by T174, K200, T211, and E300. Residue T211 is the Nucleophile of the active site.

It belongs to the ArgJ family. In terms of assembly, heterodimer of an alpha and a beta chain. Post-translationally, the alpha and beta chains are autoproteolytically processed from a single precursor protein within the mitochondrion.

The protein localises to the mitochondrion matrix. It catalyses the reaction N(2)-acetyl-L-ornithine + L-glutamate = N-acetyl-L-glutamate + L-ornithine. It carries out the reaction L-glutamate + acetyl-CoA = N-acetyl-L-glutamate + CoA + H(+). Its pathway is amino-acid biosynthesis; L-arginine biosynthesis; L-ornithine and N-acetyl-L-glutamate from L-glutamate and N(2)-acetyl-L-ornithine (cyclic): step 1/1. The protein operates within amino-acid biosynthesis; L-arginine biosynthesis; N(2)-acetyl-L-ornithine from L-glutamate: step 1/4. In terms of biological role, catalyzes two activities which are involved in the cyclic version of arginine biosynthesis: the synthesis of acetylglutamate from glutamate and acetyl-CoA, and of ornithine by transacetylation between acetylornithine and glutamate. This Candida tropicalis (strain ATCC MYA-3404 / T1) (Yeast) protein is Arginine biosynthesis bifunctional protein ArgJ, mitochondrial.